Reading from the N-terminus, the 319-residue chain is GTP 3',8-cyclase (319 aa).

Residues 4–219 form the Radical SAM core domain; it reads KHGRKINYLR…SKHSDLIPVE (216 aa). R13 provides a ligand contact to GTP. [4Fe-4S] cluster-binding residues include C20 and C24. Y26 is an S-adenosyl-L-methionine binding site. A [4Fe-4S] cluster-binding site is contributed by C27. R63 contributes to the GTP binding site. G67 provides a ligand contact to S-adenosyl-L-methionine. Residue T94 participates in GTP binding. Residue S118 coordinates S-adenosyl-L-methionine. GTP is bound at residue K155. M189 serves as a coordination point for S-adenosyl-L-methionine. [4Fe-4S] cluster contacts are provided by C249 and C252. 254-256 contacts GTP; that stretch reads RVR. A [4Fe-4S] cluster-binding site is contributed by C266.

The protein belongs to the radical SAM superfamily. MoaA family. In terms of assembly, monomer and homodimer. Requires [4Fe-4S] cluster as cofactor.

The enzyme catalyses GTP + AH2 + S-adenosyl-L-methionine = (8S)-3',8-cyclo-7,8-dihydroguanosine 5'-triphosphate + 5'-deoxyadenosine + L-methionine + A + H(+). It participates in cofactor biosynthesis; molybdopterin biosynthesis. Functionally, catalyzes the cyclization of GTP to (8S)-3',8-cyclo-7,8-dihydroguanosine 5'-triphosphate. The chain is GTP 3',8-cyclase from Clostridium botulinum (strain Okra / Type B1).